We begin with the raw amino-acid sequence, 94 residues long: Integration host factor subunit beta (94 aa).

Belongs to the bacterial histone-like protein family. Heterodimer of an alpha and a beta chain.

This protein is one of the two subunits of integration host factor, a specific DNA-binding protein that functions in genetic recombination as well as in transcriptional and translational control. The polypeptide is Integration host factor subunit beta (Vibrio campbellii (strain ATCC BAA-1116)).